The chain runs to 114 residues: Large ribosomal subunit protein bL19 (114 aa).

The protein belongs to the bacterial ribosomal protein bL19 family.

In terms of biological role, this protein is located at the 30S-50S ribosomal subunit interface and may play a role in the structure and function of the aminoacyl-tRNA binding site. In Acidithiobacillus ferrooxidans (strain ATCC 23270 / DSM 14882 / CIP 104768 / NCIMB 8455) (Ferrobacillus ferrooxidans (strain ATCC 23270)), this protein is Large ribosomal subunit protein bL19.